An 89-amino-acid chain; its full sequence is MTIDKINEIFKENWKNKLTKYEIARIISARALQLSMGALPLIDTSNLKSDDVISIAEEELKRGVLPITIRRIYPNGQVELISVRKIENR.

The protein belongs to the archaeal Rpo6/eukaryotic RPB6 RNA polymerase subunit family. As to quaternary structure, part of the 13-subunit RNA polymerase complex.

It is found in the cytoplasm. It catalyses the reaction RNA(n) + a ribonucleoside 5'-triphosphate = RNA(n+1) + diphosphate. DNA-dependent RNA polymerase (RNAP) catalyzes the transcription of DNA into RNA using the four ribonucleoside triphosphates as substrates. Its function is as follows. Reconstitution experiments show this subunit is required for basic activity. This chain is DNA-directed RNA polymerase subunit Rpo6, found in Sulfolobus acidocaldarius (strain ATCC 33909 / DSM 639 / JCM 8929 / NBRC 15157 / NCIMB 11770).